We begin with the raw amino-acid sequence, 353 residues long: Ribosomal RNA small subunit methyltransferase H (353 aa).

Residues 49–51 (GGH), D68, F95, D126, and Q133 contribute to the S-adenosyl-L-methionine site.

It belongs to the methyltransferase superfamily. RsmH family.

The protein resides in the cytoplasm. The catalysed reaction is cytidine(1402) in 16S rRNA + S-adenosyl-L-methionine = N(4)-methylcytidine(1402) in 16S rRNA + S-adenosyl-L-homocysteine + H(+). Functionally, specifically methylates the N4 position of cytidine in position 1402 (C1402) of 16S rRNA. The polypeptide is Ribosomal RNA small subunit methyltransferase H (Corynebacterium urealyticum (strain ATCC 43042 / DSM 7109)).